The chain runs to 628 residues: Forkhead box protein O (628 aa).

Thr50 carries the phosphothreonine; by PKB/AKT1 modification. Ser81 bears the Phosphoserine mark. Residues 101-207 (WGNLSYADLI…ETSRYEKRRG (107 aa)) constitute a DNA-binding region (fork-head). 2 disordered regions span residues 188–210 (KSVRRRAASMETSRYEKRRGRAK) and 223–270 (GLND…SSCG). Phosphoserine; by PKB/AKT1 is present on Ser196. Composition is skewed to polar residues over residues 227–236 (ATPSPSSSVS) and 261–270 (RASSNASSCG). Ser264 is modified (phosphoserine; by PKB/AKT1). 3 positions are modified to phosphoserine: Ser267, Ser268, and Ser273. Disordered stretches follow at residues 327-373 (SAAS…SLQP) and 398-451 (NSVT…QQQQ). A compositionally biased stretch (pro residues) spans 334–343 (TQPPPPPYPA). The segment covering 344–359 (PQQQQQQQPQQQQAYT) has biased composition (low complexity). Positions 411 to 423 (SEPSSDSLNTYSN) are enriched in polar residues. The segment covering 438–451 (QQQRQQQQQQQQQQ) has biased composition (low complexity).

In terms of assembly, interacts with melt.

The protein resides in the cytoplasm. It is found in the nucleus. In terms of biological role, transcription factor involved in the regulation of the insulin signaling pathway. Consistently activates both the downstream target Thor\d4EBP and the feedback control target InR. Involved in negative regulation of the cell cycle, modulating cell growth and proliferation. In response to cellular stresses, such as nutrient deprivation or increased levels of reactive oxygen species, foxo is activated and inhibits growth through the action of target genes such as Thor. Foxo activated in the adult fat body can regulate lifespan in adults; an insulin peptide itself may function as one secondary messenger of insulin-regulated aging. Also regulates Lip4, homolog of human acid lipases, thereby acting as a key modulator of lipid metabolism by insulin signaling and integrates insulin responses to glucose and lipid homeostasis. In Drosophila willistoni (Fruit fly), this protein is Forkhead box protein O.